A 294-amino-acid polypeptide reads, in one-letter code: MSFPFASLLKRPSAISSLLSLKKPGSWSSILLKAVGVLSRDSRWHSDLLKMLTEEMDSLNGQINTWTDNNPLLDEITKPYRKSSTRFFHPLLVLLMSRASVNGDPPSQQLFQRYKQLARVTELIHAANIIHINIGEEQSNEQIKLATLVGDYLLGKASVDLAHLENNAITEIMASVIANLVEGHFGSRQNGSVGLSNERTILLQSAFMPAKACLCASILNNSSQYINDACFNYGKFLGLSLQLAHKPVSPDAQVLQKNNDILKTYVENAKSSLSVFPDIEAKQALMEIANSVSK.

It belongs to the FPP/GGPP synthase family. As to quaternary structure, heterotetramer of 2 dps1 and 2 dlp1 subunits.

Its subcellular location is the mitochondrion. The catalysed reaction is 7 isopentenyl diphosphate + (2E,6E)-farnesyl diphosphate = all-trans-decaprenyl diphosphate + 7 diphosphate. Its pathway is cofactor biosynthesis; ubiquinone biosynthesis. In terms of biological role, supplies decaprenyl diphosphate, the precursor for the side chain of the isoprenoid quinones ubiquinone-10. The chain is Decaprenyl-diphosphate synthase subunit 2 (dlp1) from Schizosaccharomyces pombe (strain 972 / ATCC 24843) (Fission yeast).